A 1265-amino-acid polypeptide reads, in one-letter code: 1-phosphatidylinositol 4,5-bisphosphate phosphodiesterase gamma-2 (1265 aa).

The region spanning 20–131 (RALELGTVMT…WLSGLKILHQ (112 aa)) is the PH domain. The PI-PLC X-box domain maps to 312-456 (QDMNNPLSHY…LREKIIIKHK (145 aa)). Active-site residues include histidine 327 and histidine 372. SH2 domains are found at residues 532 to 635 (WFHK…TDPV) and 646 to 735 (WYYD…RYPV). Phosphotyrosine; by BTK is present on residues tyrosine 753 and tyrosine 759. The region spanning 769–829 (MPQRTVKALY…PSNYVEDISA (61 aa)) is the SH3 domain. One can recognise a PI-PLC Y-box domain in the interval 930 to 1044 (LSDLVVYCKP…GYVLQPESMR (115 aa)). In terms of domain architecture, C2 spans 1038-1169 (LQPESMRSEK…SGFRSVPLKN (132 aa)). Phosphotyrosine; by BTK is present on tyrosine 1197. Tyrosine 1217 and tyrosine 1245 each carry phosphotyrosine.

As to quaternary structure, part of a complex composed of EEIG1, TNFRSF11A/RANK, PLCG2, GAB2, TEC and BTK; complex formation increases in the presence of TNFSF11/RANKL. Interacts (via SH2 domain) with CSF1R (tyrosine phosphorylated). Interacts constitutively with THEMIS2. Ca(2+) is required as a cofactor. Phosphorylated on tyrosine residues by CSF1R. Phosphorylated on tyrosine residues by BTK and SYK; upon ligand-induced activation of a variety of growth factor receptors and immune system receptors. Phosphorylation leads to increased phospholipase activity.

It is found in the membrane raft. The enzyme catalyses a 1,2-diacyl-sn-glycero-3-phospho-(1D-myo-inositol-4,5-bisphosphate) + H2O = 1D-myo-inositol 1,4,5-trisphosphate + a 1,2-diacyl-sn-glycerol + H(+). The production of the second messenger molecules diacylglycerol (DAG) and inositol 1,4,5-trisphosphate (IP3) is mediated by activated phosphatidylinositol-specific phospholipase C enzymes. It is a crucial enzyme in transmembrane signaling. The sequence is that of 1-phosphatidylinositol 4,5-bisphosphate phosphodiesterase gamma-2 from Rattus norvegicus (Rat).